The primary structure comprises 684 residues: Dipeptidyl-peptidase 5 (684 aa).

Residues 1–24 (MNKKIFSMMAASIIGSAAMTPSAG) form the signal peptide. 3 WD repeats span residues 87–127 (DTES…TERR), 220–259 (KPWS…DIYI), and 323–363 (TFDY…GKIR). Residues Ser-542, Asp-627, and His-659 each act as charge relay system in the active site.

The protein belongs to the peptidase S9C family. In terms of assembly, homodimer.

It is found in the periplasm. Functionally, catalyzes the removal of dipeptides from the N-terminus of oligopeptides. Prefers Ala and hydrophobic residues except Pro at the P1 position, and has no preference for P2 residues. Shows high dipeptidyl peptidase activity toward the synthetic substrates Lys-Ala-, Gly-Phe-, Met-Leu-, and Ser-Tyr-methylcoumaryl-7-amide (MCA), and slowly hydrolyzes Val-Tyr-MCA. Is likely involved in amino acid metabolism and bacterial growth of asaccharolytic P.gingivalis, that utilizes amino acids from extracellular proteinaceous nutrients as energy and carbon sources. This chain is Dipeptidyl-peptidase 5, found in Porphyromonas gingivalis (strain ATCC 33277 / DSM 20709 / CIP 103683 / JCM 12257 / NCTC 11834 / 2561).